Consider the following 195-residue polypeptide: U8 snoRNA-decapping enzyme (195 aa).

The region spanning 18-168 (GWRHACHAML…LENTFIGNAR (151 aa)) is the Nudix hydrolase domain. Residues H24, R50, and F57 each contribute to the substrate site. Mn(2+)-binding residues include G59, E76, E80, and H99. The short motif at 61-82 (FVDLRDGSLEDGLNRELGEELG) is the Nudix box element. Residues N166 and Q170 each contribute to the substrate site. E173 provides a ligand contact to Mn(2+).

Belongs to the Nudix hydrolase family. NUDT16 subfamily. Homodimer. Mg(2+) is required as a cofactor. Requires Mn(2+) as cofactor. It depends on Co(2+) as a cofactor.

It is found in the nucleus. The protein resides in the nucleolus. It localises to the nucleoplasm. Its subcellular location is the cytoplasm. It carries out the reaction a 5'-end (N(7)-methyl 5'-triphosphoguanosine)-ribonucleoside in mRNA + H2O = N(7)-methyl-GDP + a 5'-end phospho-ribonucleoside in mRNA + 2 H(+). The catalysed reaction is IDP + H2O = IMP + phosphate + H(+). The enzyme catalyses dIDP + H2O = dIMP + phosphate + H(+). It catalyses the reaction a 5'-end NAD(+)-phospho-ribonucleoside in mRNA + H2O = a 5'-end phospho-ribonucleoside in mRNA + NAD(+) + H(+). It carries out the reaction a 5'-end FAD-phospho-ribonucleoside in mRNA + H2O = a 5'-end phospho-adenosine-phospho-ribonucleoside in mRNA + FMN + 2 H(+). The catalysed reaction is a 5'-end CoA-ribonucleoside in mRNA + H2O = a 5'-end phospho-adenosine-phospho-ribonucleoside in mRNA + (R)-4'-phosphopantetheine + 2 H(+). Its function is as follows. RNA-binding and decapping enzyme that catalyzes the cleavage of the cap structure of snoRNAs and mRNAs in a metal-dependent manner. Part of the U8 snoRNP complex that is required for the accumulation of mature 5.8S and 28S rRNA. Has diphosphatase activity and removes m7G and/or m227G caps from U8 snoRNA and leaves a 5'monophosphate on the RNA. Also catalyzes the cleavage of the cap structure on mRNAs. Does not hydrolyze cap analog structures like 7-methylguanosine nucleoside triphosphate (m7GpppG). Also hydrolysis m7G- and m227G U3-capped RNAs but with less efficiencies. Has broad substrate specificity with manganese or cobalt as cofactor and can act on various RNA species. Binds to the U8 snoRNA; metal is not required for RNA-binding. May play a role in the regulation of snoRNAs and mRNAs degradation. Also acts as a phosphatase; hydrolyzes the non-canonical purine nucleotides inosine diphosphate (IDP) and deoxyinosine diphosphate (dITP) as well as guanosine diphosphate (GDP), deoxyguanosine diphosphate (dGDP), xanthine diphosphate (XDP), inosine triphosphate (ITP) and deoxyinosine triphosphate (ITP) to their respective monophosphate derivatives and does not distinguish between the deoxy- and ribose forms. The order of activity with different substrates is IDP &gt; dIDP &gt;&gt; GDP = dGDP &gt; XDP = ITP = dITP. Binds strongly to GTP, ITP and XTP. Participates in the hydrolysis of dIDP/IDP and probably excludes non-canonical purines from RNA and DNA precursor pools, thus preventing their incorporation into RNA and DNA and avoiding chromosomal lesions. Exhibits decapping activity towards NAD-capped RNAs and FAD-capped RNAs. Exhibits decapping activity towards dpCoA-capped RNAs in vitro. This chain is U8 snoRNA-decapping enzyme (NUDT16), found in Ovis aries (Sheep).